A 427-amino-acid polypeptide reads, in one-letter code: 3-isopropylmalate dehydratase large subunit (427 aa).

Cys-308, Cys-368, and Cys-371 together coordinate [4Fe-4S] cluster.

The protein belongs to the aconitase/IPM isomerase family. LeuC type 2 subfamily. Heterodimer of LeuC and LeuD. Requires [4Fe-4S] cluster as cofactor.

The catalysed reaction is (2R,3S)-3-isopropylmalate = (2S)-2-isopropylmalate. The protein operates within amino-acid biosynthesis; L-leucine biosynthesis; L-leucine from 3-methyl-2-oxobutanoate: step 2/4. Its function is as follows. Catalyzes the isomerization between 2-isopropylmalate and 3-isopropylmalate, via the formation of 2-isopropylmaleate. In Geobacter metallireducens (strain ATCC 53774 / DSM 7210 / GS-15), this protein is 3-isopropylmalate dehydratase large subunit.